The chain runs to 619 residues: MALLQIAEPGQSPKPHERRLAVGIDLGTTNSLVAAVRSGVAEPLPDARGRLILPSAVRYHADRAEVGEGARAAAAQDPLNTIISVKRLMGRGLEDVKQLGEQLPYRFRQGESHMPFIETVQGLKSPVEVSADILRELRQRAETTLGGELVGAVITVPAYFDDAQRQATKDAARLAGLNVLRLLNEPTAAAVAYGLDKGAEGLVAIYDLGGGTFDISILRLTRGVFEVLATGGDTALGGDDFDHAVAGWVIEQAGLSADLDPGRQRELLQIACAAKERLTDATSVSVSYGDWRGELSRAKLDELIEPFIARSLRSCRRAVRDSGIDLEEIRSVVMVGGSTRVPRVRSAVGELFGCEPLTDIDPDQVVAIGAAIQADALAGNKRGEELLLLDVIPLSLGLETMGGLMEKVIPRNTTIPVARAQEFTTYKDGQTAMMIHVLQGERELVKDCRSLARFELRGIPPMVAGAAKIRVTFQVDADGLLGVSARELSSGVEASIQVKPSYGLTDGEIARMLKDSFDYAGDDKAARALREQQVEAQRLLEAVQSALDADGERLLDEEEHLAIAAQMDSLRELAGGSDTAAIENQIKRLSQVTDAFAARRMDATVKAALSGRRLNEIEE.

Belongs to the heat shock protein 70 family.

Functionally, chaperone involved in the maturation of iron-sulfur cluster-containing proteins. Has a low intrinsic ATPase activity which is markedly stimulated by HscB. This chain is Chaperone protein HscA homolog, found in Pseudomonas paraeruginosa (strain DSM 24068 / PA7) (Pseudomonas aeruginosa (strain PA7)).